Reading from the N-terminus, the 258-residue chain is Imidazole glycerol phosphate synthase subunit HisF (258 aa).

Catalysis depends on residues aspartate 11 and aspartate 130.

This sequence belongs to the HisA/HisF family. Heterodimer of HisH and HisF.

Its subcellular location is the cytoplasm. The catalysed reaction is 5-[(5-phospho-1-deoxy-D-ribulos-1-ylimino)methylamino]-1-(5-phospho-beta-D-ribosyl)imidazole-4-carboxamide + L-glutamine = D-erythro-1-(imidazol-4-yl)glycerol 3-phosphate + 5-amino-1-(5-phospho-beta-D-ribosyl)imidazole-4-carboxamide + L-glutamate + H(+). Its pathway is amino-acid biosynthesis; L-histidine biosynthesis; L-histidine from 5-phospho-alpha-D-ribose 1-diphosphate: step 5/9. IGPS catalyzes the conversion of PRFAR and glutamine to IGP, AICAR and glutamate. The HisF subunit catalyzes the cyclization activity that produces IGP and AICAR from PRFAR using the ammonia provided by the HisH subunit. The polypeptide is Imidazole glycerol phosphate synthase subunit HisF (Methylorubrum extorquens (strain CM4 / NCIMB 13688) (Methylobacterium extorquens)).